The primary structure comprises 617 residues: Sodium-coupled monocarboxylate transporter 2 (617 aa).

The Extracellular portion of the chain corresponds to 1 to 5 (MEVKN). A helical transmembrane segment spans residues 6–26 (FAVWDYVVFAALFIISSGIGV). The Cytoplasmic segment spans residues 27-47 (FYAIKERKKATSREFLVGGRQ). The chain crosses the membrane as a helical span at residues 48 to 68 (MSFGPVALSLTASFMSAVTVL). The Extracellular segment spans residues 69-80 (GTPADVYRFGAS). The helical transmembrane segment at 81 to 101 (FVLFFITYGLVIILTSELFLP) threads the bilayer. Residues 102–128 (VFYRSGITSTYEYLQLRFNKPVRYAAT) are Cytoplasmic-facing. The helical transmembrane segment at 129 to 149 (VIYIVQTILYTGVVVYAPALA) threads the bilayer. Topologically, residues 150–157 (LNQVTGFD) are extracellular. A helical membrane pass occupies residues 158–178 (LWGSVFATGIVCTFYCTLGGL). Over 179–180 (KA) the chain is Cytoplasmic. A helical transmembrane segment spans residues 181 to 201 (VVWTDAFQMVVMIVGFLTVLI). Topologically, residues 202–235 (QGSTYAGGLHNVLEQAENGSRLNIFDFDIDPLRR) are extracellular. Residue asparagine 219 is glycosylated (N-linked (GlcNAc...) asparagine). Residues 236–256 (HTFWTISVGGTFTWLGIYGVN) form a helical membrane-spanning segment. Over 257–273 (QSTIQRCISCKTEKHAK) the chain is Cytoplasmic. The chain crosses the membrane as a helical span at residues 274–294 (LALYFNLLGLWIILLCAVFSG). Residues 295-334 (LTMYAHFKDCDPWTSGIISAPDQLMPYFVMELFSTMPGLP) lie on the Extracellular side of the membrane. A helical transmembrane segment spans residues 335-357 (GLFVACAFSGTLSTVAASINALA). Topologically, residues 358 to 385 (TVTFEDFVKSCFPRLSDKLSTWISKGLC) are cytoplasmic. The helical transmembrane segment at 386–406 (LLFGVICTSTAVAASLMGGVI) threads the bilayer. Over 407-411 (QAALS) the chain is Extracellular. A helical transmembrane segment spans residues 412–432 (IHGMCGGPMLGLFSLGILFPF). Over 433 to 437 (VNWKG) the chain is Cytoplasmic. The chain crosses the membrane as a helical span at residues 438–458 (ALAGLLTGILLSFWVAIGAFI). Residues 459-507 (YPAPASKTWPLPLSTDQCGLSNVTESVPPVLSSRPAIAETWYALSYLHY) are Extracellular-facing. Asparagine 480 carries N-linked (GlcNAc...) asparagine glycosylation. A helical membrane pass occupies residues 508 to 528 (STVGCLGCIAAGVIISFLTGL). At 529 to 617 (QKGKDIPPLL…NMALEKITHF (89 aa)) the chain is on the cytoplasmic side.

It belongs to the sodium:solute symporter (SSF) (TC 2.A.21) family.

It is found in the apical cell membrane. It catalyses the reaction (S)-lactate(out) + Na(+)(out) = (S)-lactate(in) + Na(+)(in). The enzyme catalyses nicotinate(out) + Na(+)(out) = nicotinate(in) + Na(+)(in). The catalysed reaction is pyruvate(out) + Na(+)(out) = pyruvate(in) + Na(+)(in). It carries out the reaction propanoate(out) + Na(+)(out) = propanoate(in) + Na(+)(in). It catalyses the reaction butanoate(out) + Na(+)(out) = butanoate(in) + Na(+)(in). The enzyme catalyses acetoacetate(out) + Na(+)(out) = acetoacetate(in) + Na(+)(in). Acts as an electroneutral and low-affinity sodium (Na(+))-dependent sodium-coupled solute transporter. Catalyzes the transport across the plasma membrane of many monocarboxylates such as lactate, pyruvate, nicotinate, propionate, butyrate and beta-D-hydroxybutyrate. May be responsible for the first step of reabsorption of monocarboxylates from the lumen of the proximal tubule of the kidney and the small intestine. May play also a role in monocarboxylates transport in the retina. Mediates electroneutral uptake of lactate, with a stoichiometry of 2 Na(+) for each lactate. The sequence is that of Sodium-coupled monocarboxylate transporter 2 (SLC5A12) from Bos taurus (Bovine).